The chain runs to 213 residues: Putative 3-methyladenine DNA glycosylase (213 aa).

Belongs to the DNA glycosylase MPG family.

This chain is Putative 3-methyladenine DNA glycosylase, found in Corynebacterium jeikeium (strain K411).